The sequence spans 562 residues: Formate--tetrahydrofolate ligase (562 aa).

71 to 78 (TPAGEGKS) contributes to the ATP binding site.

It belongs to the formate--tetrahydrofolate ligase family.

The enzyme catalyses (6S)-5,6,7,8-tetrahydrofolate + formate + ATP = (6R)-10-formyltetrahydrofolate + ADP + phosphate. It participates in one-carbon metabolism; tetrahydrofolate interconversion. This chain is Formate--tetrahydrofolate ligase, found in Bacillus cereus (strain Q1).